Consider the following 92-residue polypeptide: Trp operon repressor homolog (92 aa).

A DNA-binding region spans residues 56 to 79; that stretch reads QREVASKLGVSITKITRGAANLQD.

This sequence belongs to the TrpR family. Homodimer.

It localises to the cytoplasm. In terms of biological role, this protein is an aporepressor. When complexed with L-tryptophan it binds the operator region of the trp operon and prevents the initiation of transcription. The chain is Trp operon repressor homolog from Xylella fastidiosa (strain M23).